Consider the following 451-residue polypeptide: NAC domain containing protein 52 (451 aa).

The tract at residues 1–21 (MGRESVAVVTAPPSATAPGTA) is disordered. The region spanning 27-178 (LAPGFRFHPT…AYVLCRVFHK (152 aa)) is the NAC domain. A DNA-binding region spans residues 126-184 (LGMKKTLVFHSGRAPDGLRTNWVMHEYRLVEYETEKNGNLVQDAYVLCRVFHKNNIGPP). 2 disordered regions span residues 255 to 337 (DQQN…TTTT) and 370 to 400 (KKEKPQQPLRPHKEPLPPQTPLASPEEKVND). Basic and acidic residues predominate over residues 256–270 (QQNHHENDLKPEEHN). Positions 272–292 (NNNYDENEETLKREQMEEEER) form a coiled coil. The segment covering 318-337 (ESNNNSSRNTQDHCSSTTTT) has biased composition (low complexity). Residues 370–384 (KKEKPQQPLRPHKEP) are compositionally biased toward basic and acidic residues. Residues 398–446 (VNDLQKEIHQMSVERETFKLEMMSAEAMISILQSRIDALRQENEELKKN) adopt a coiled-coil conformation.

In terms of assembly, interacts with JMJ14 and NAC050. Mostly expressed in floral organs, and, at low levels, in other organs.

It localises to the nucleus. Its function is as follows. Transcriptional repressor that binds to the motif 5'-(C/T)A(C/A)G-3' in the promoter of target genes. Also binds to the 5'-CTTGNNNNNCAAG-3' consensus sequence in chromatin. Can bind to the mitochondrial dysfunction motif (MDM) present in the upstream regions of mitochondrial dysfunction stimulon (MDS) genes involved in mitochondrial retrograde regulation (MRR). Together with NAC050 and JMJ14, regulates gene expression and flowering time by associating with the histone demethylase JMJ14, probably by the promotion of RNA-mediated gene silencing. Regulates siRNA-dependent post-transcriptional gene silencing (PTGS) through SGS3 expression modulation. Required during pollen development. In Arabidopsis thaliana (Mouse-ear cress), this protein is NAC domain containing protein 52.